The chain runs to 72 residues: uncharacterized protein (72 aa).

This is an uncharacterized protein from Escherichia coli (strain K12).